A 348-amino-acid polypeptide reads, in one-letter code: CCN family member 2 (348 aa).

The N-terminal stretch at 1 to 25 (MLASVAGPISLALVLLALCTRPAMG) is a signal peptide. In terms of domain architecture, IGFBP N-terminal spans 26-97 (QDCSAQCQCA…NRKIGVCTAK (72 aa)). Cystine bridges form between cysteine 28–cysteine 53, cysteine 32–cysteine 55, cysteine 34–cysteine 56, cysteine 42–cysteine 59, cysteine 67–cysteine 81, and cysteine 73–cysteine 94. The region spanning 100–166 (APCVFGGSVY…GKCCEEWVCD (67 aa)) is the VWFC domain. The 46-residue stretch at 197-242 (NCLVQTTEWSACSKTCGMGISTRVTNDNTFCRLEKQSRLCMVRPCE) folds into the TSP type-1 domain. The interval 246-348 (EENIKKGKKC…YYRKMYGDMA (103 aa)) is heparin-binding. Intrachain disulfides connect cysteine 255–cysteine 292, cysteine 272–cysteine 306, cysteine 283–cysteine 322, cysteine 286–cysteine 324, and cysteine 291–cysteine 328. One can recognise a CTCK domain in the interval 255 to 329 (CIRTPKIAKP…KTCACHYNCP (75 aa)).

This sequence belongs to the CCN family. Monomer. Interacts with TSKU. As to expression, testis, spleen, kidney, lung, heart, and brain (lowest level in testis and highest in lung).

It is found in the secreted. The protein resides in the extracellular space. It localises to the extracellular matrix. Functionally, major connective tissue mitoattractant secreted by vascular endothelial cells. Promotes proliferation and differentiation of chondrocytes. Is involved in the stimulation of osteoblast differentiation and has a critical role in osteogenesis. Mediates heparin- and divalent cation-dependent cell adhesion in many cell types including fibroblasts, myofibroblasts, endothelial and epithelial cells. Enhances fibroblast growth factor-induced DNA synthesis. The chain is CCN family member 2 from Mus musculus (Mouse).